Reading from the N-terminus, the 168-residue chain is Lipoprotein signal peptidase (168 aa).

4 consecutive transmembrane segments (helical) span residues 5 to 25 (SPYALLVVAAIALDQWIKHLV), 37 to 57 (LVPFLALFRTYNTGIAFSMFS), 59 to 79 (FGDTGLVVIAVLVVAFVLYLA), and 85 to 105 (GHVIARTGFALIIGGALGNLI). Catalysis depends on residues Asp115 and Asp133. The helical transmembrane segment at 125-145 (SFAIFNLADAFISVGAALVVF) threads the bilayer.

Belongs to the peptidase A8 family.

The protein resides in the cell inner membrane. It catalyses the reaction Release of signal peptides from bacterial membrane prolipoproteins. Hydrolyzes -Xaa-Yaa-Zaa-|-(S,diacylglyceryl)Cys-, in which Xaa is hydrophobic (preferably Leu), and Yaa (Ala or Ser) and Zaa (Gly or Ala) have small, neutral side chains.. It participates in protein modification; lipoprotein biosynthesis (signal peptide cleavage). In terms of biological role, this protein specifically catalyzes the removal of signal peptides from prolipoproteins. The sequence is that of Lipoprotein signal peptidase from Mesorhizobium japonicum (strain LMG 29417 / CECT 9101 / MAFF 303099) (Mesorhizobium loti (strain MAFF 303099)).